The sequence spans 468 residues: 3-isopropylmalate dehydratase large subunit (468 aa).

[4Fe-4S] cluster is bound by residues C345, C405, and C408.

It belongs to the aconitase/IPM isomerase family. LeuC type 1 subfamily. Heterodimer of LeuC and LeuD. Requires [4Fe-4S] cluster as cofactor.

It carries out the reaction (2R,3S)-3-isopropylmalate = (2S)-2-isopropylmalate. The protein operates within amino-acid biosynthesis; L-leucine biosynthesis; L-leucine from 3-methyl-2-oxobutanoate: step 2/4. Catalyzes the isomerization between 2-isopropylmalate and 3-isopropylmalate, via the formation of 2-isopropylmaleate. The protein is 3-isopropylmalate dehydratase large subunit of Oceanobacillus iheyensis (strain DSM 14371 / CIP 107618 / JCM 11309 / KCTC 3954 / HTE831).